We begin with the raw amino-acid sequence, 1192 residues long: DNA topoisomerase 2 (1192 aa).

ATP is bound by residues Asn64, Asn95, and 142–149 (GTNGVGLK). Mg(2+)-binding residues include Glu438, Asp539, and Asp541. Positions 707–1174 (IPNFLDGMTR…PGASVWLEEI (468 aa)) constitute a Topo IIA-type catalytic domain. Catalysis depends on Tyr800, which acts as the O-(5'-phospho-DNA)-tyrosine intermediate.

It belongs to the type II topoisomerase family. Requires Mg(2+) as cofactor. Mn(2+) is required as a cofactor. Ca(2+) serves as cofactor.

Its subcellular location is the host cytoplasm. It catalyses the reaction ATP-dependent breakage, passage and rejoining of double-stranded DNA.. Type II topoisomerase. Processively relaxes supercoiled DNA. Displays DNA-supercoiling activity only when associated with the viral histone-like protein. The polypeptide is DNA topoisomerase 2 (Ornithodoros (relapsing fever ticks)).